The primary structure comprises 802 residues: ATP-dependent zinc metalloprotease FTSH 7, chloroplastic (802 aa).

A chloroplast-targeting transit peptide spans 1 to 55 (MTTTFEFLQPRIHGFATCCSSNSLLYSKASRFFNDRCRVYRQNPNRFVSNSITLP). The disordered stretch occupies residues 87–117 (CQEDDQNESSSEEEESSQSTPAKSERKREKK). A compositionally biased stretch (acidic residues) spans 88–102 (QEDDQNESSSEEEES). 2 helical membrane passes run 134–154 (IIQA…MFVM) and 268–288 (GGFF…AGLI). 365 to 372 (GLPGTGKT) contacts ATP. H590 contributes to the Zn(2+) binding site. E591 is a catalytic residue. The Zn(2+) site is built by H594 and D673.

It in the N-terminal section; belongs to the AAA ATPase family. This sequence in the C-terminal section; belongs to the peptidase M41 family. The cofactor is Zn(2+).

Its subcellular location is the plastid. The protein resides in the chloroplast thylakoid membrane. Probable ATP-dependent zinc metallopeptidase. The polypeptide is ATP-dependent zinc metalloprotease FTSH 7, chloroplastic (FTSH7) (Arabidopsis thaliana (Mouse-ear cress)).